We begin with the raw amino-acid sequence, 205 residues long: Small ribosomal subunit protein uS4 (205 aa).

The interval 14 to 49 is disordered; it reads RMGENIWGRPKSPVNRREYGPGQHGQRRKGKMSDFG. Residues 94-157 enclose the S4 RNA-binding domain; the sequence is SRLDAIVYRA…KQLVTVLEAV (64 aa).

This sequence belongs to the universal ribosomal protein uS4 family. In terms of assembly, part of the 30S ribosomal subunit. Contacts protein S5. The interaction surface between S4 and S5 is involved in control of translational fidelity.

One of the primary rRNA binding proteins, it binds directly to 16S rRNA where it nucleates assembly of the body of the 30S subunit. In terms of biological role, with S5 and S12 plays an important role in translational accuracy. This Agrobacterium fabrum (strain C58 / ATCC 33970) (Agrobacterium tumefaciens (strain C58)) protein is Small ribosomal subunit protein uS4.